Consider the following 270-residue polypeptide: 5'-nucleotidase SurE (270 aa).

D14, D15, S46, and N104 together coordinate a divalent metal cation.

It belongs to the SurE nucleotidase family. It depends on a divalent metal cation as a cofactor.

The protein resides in the cytoplasm. The enzyme catalyses a ribonucleoside 5'-phosphate + H2O = a ribonucleoside + phosphate. In terms of biological role, nucleotidase that shows phosphatase activity on nucleoside 5'-monophosphates. This is 5'-nucleotidase SurE from Microcystis aeruginosa (strain NIES-843 / IAM M-2473).